The sequence spans 140 residues: Small ribosomal subunit protein uS19 (140 aa).

A disordered region spans residues 55–74 (LAEARESGTEETANNPIRTH).

This sequence belongs to the universal ribosomal protein uS19 family.

In terms of biological role, protein S19 forms a complex with S13 that binds strongly to the 16S ribosomal RNA. This chain is Small ribosomal subunit protein uS19, found in Halobacterium salinarum (strain ATCC 29341 / DSM 671 / R1).